The sequence spans 301 residues: DSC E3 ubiquitin ligase complex subunit B (301 aa).

The next 3 membrane-spanning stretches (helical) occupy residues 9 to 29, 52 to 72, and 90 to 110; these read APITKLLLIYTIASSIALSIL, LATWQLAGFTNSTEALFAAML, and TFIISTLPYTSLLPPLLLVLL. Residues 268–284 show a composition bias toward low complexity; that stretch reads AAAAASGNAGSASEASG. Residues 268–301 are disordered; it reads AAAAASGNAGSASEASGQRQRRREGGIMDRLRAL. Residues 290–301 show a composition bias toward basic and acidic residues; sequence REGGIMDRLRAL.

As to quaternary structure, component of the DSC E3 ubiquitin ligase complex composed of dscA, dscB, dscC and dscD.

The protein localises to the endoplasmic reticulum membrane. It carries out the reaction S-ubiquitinyl-[E2 ubiquitin-conjugating enzyme]-L-cysteine + [acceptor protein]-L-lysine = [E2 ubiquitin-conjugating enzyme]-L-cysteine + N(6)-ubiquitinyl-[acceptor protein]-L-lysine.. It participates in protein modification; protein ubiquitination. Functionally, component of the DSC E3 ubiquitin ligase complex which is required for the srbA transcriptional activator proteolytic cleavage to release the soluble transcription factor from the membrane in low oxygen or sterol conditions. Required for growth during hypoxia and triazole drug susceptibility, as well as for virulence in a murine model of invasive pulmonary aspergillosis (IPA). This is DSC E3 ubiquitin ligase complex subunit B from Aspergillus fumigatus (strain ATCC MYA-4609 / CBS 101355 / FGSC A1100 / Af293) (Neosartorya fumigata).